A 44-amino-acid polypeptide reads, in one-letter code: Opistoporin-2 (44 aa).

In terms of tissue distribution, expressed by the venom gland.

It localises to the secreted. It is found in the target cell membrane. Functionally, at high concentrations, acts as a pore former in cellular membranes and causes the leakage of the cells. At submicromolar concentrations, degranulates granulocytes and has a weak hemolytic activity against human erythrocytes. Also strongly inhibits the production of superoxide anions. Has a strong antibacterial activity against Gram-negative bacteria but is less active against Gram-positive bacteria. Also has antifungal activity. This is Opistoporin-2 from Opistophthalmus carinatus (African yellow leg scorpion).